Here is an 88-residue protein sequence, read N- to C-terminus: Elongation factor 1-beta (88 aa).

The protein belongs to the EF-1-beta/EF-1-delta family.

In terms of biological role, promotes the exchange of GDP for GTP in EF-1-alpha/GDP, thus allowing the regeneration of EF-1-alpha/GTP that could then be used to form the ternary complex EF-1-alpha/GTP/AAtRNA. The protein is Elongation factor 1-beta of Halorubrum lacusprofundi (strain ATCC 49239 / DSM 5036 / JCM 8891 / ACAM 34).